We begin with the raw amino-acid sequence, 803 residues long: PR domain zinc finger protein 4 (803 aa).

The region spanning 408-532 (KQLVLRQSIV…PESELLFYYS (125 aa)) is the SET domain. 5 C2H2-type zinc fingers span residues 593-615 (WKCSMCPQAFISPSKLHVHFMGH), 621-643 (HKCDFCSKAFSDPSNLRTHLKIH), 649-671 (YRCTLCDKSFTQKAHLESHMVIH), 677-699 (LKCDYCDKLFMRRQDLKQHVLIH), and 705-727 (IKCPKCDKLFLRTNHLKKHLNSH). The segment at 733–755 (YVCEKCTKAYLTKYHLTRHLKTC) adopts a C2H2-type 6; degenerate zinc-finger fold. Positions 757 to 803 (EPSSSSSAQEEEDDESEEEDLADSMRTEDCRMGSAVYSTDESLSAHK) are disordered. Acidic residues predominate over residues 765–778 (QEEEDDESEEEDLA). Polar residues predominate over residues 792 to 803 (VYSTDESLSAHK).

It belongs to the class V-like SAM-binding methyltransferase superfamily.

It is found in the nucleus. May function as a transcription factor involved in cell differentiation. The polypeptide is PR domain zinc finger protein 4 (Prdm4) (Mus musculus (Mouse)).